A 584-amino-acid chain; its full sequence is UvrABC system protein C (584 aa).

The region spanning 12-89 (NKPGCYLFLN…IKKYRPKYNV (78 aa)) is the GIY-YIG domain. In terms of domain architecture, UVR spans 194-229 (NQVKQTLVKQMQKASDNLQFEQAKRIKDQITSLDFI).

It belongs to the UvrC family. Interacts with UvrB in an incision complex.

The protein localises to the cytoplasm. Functionally, the UvrABC repair system catalyzes the recognition and processing of DNA lesions. UvrC both incises the 5' and 3' sides of the lesion. The N-terminal half is responsible for the 3' incision and the C-terminal half is responsible for the 5' incision. The polypeptide is UvrABC system protein C (Mycoplasma capricolum subsp. capricolum (strain California kid / ATCC 27343 / NCTC 10154)).